Here is a 592-residue protein sequence, read N- to C-terminus: V-type ATP synthase alpha chain (592 aa).

An ATP-binding site is contributed by 232–239; the sequence is GPFGAGKT.

It belongs to the ATPase alpha/beta chains family.

It carries out the reaction ATP + H2O + 4 H(+)(in) = ADP + phosphate + 5 H(+)(out). Functionally, produces ATP from ADP in the presence of a proton gradient across the membrane. The V-type alpha chain is a catalytic subunit. This chain is V-type ATP synthase alpha chain, found in Clostridium botulinum (strain Alaska E43 / Type E3).